We begin with the raw amino-acid sequence, 2335 residues long: uncharacterized protein (2335 aa).

6 helical membrane-spanning segments follow: residues 114–134 (FMIG…AHII), 148–167 (FISG…SIVF), 172–194 (VVIP…IVKY), 214–234 (IFFL…PFLS), 255–275 (EFGF…LSLL), and 307–327 (FVNL…IAYF). The segment covering 1043–1052 (ATSESISFNQ) has biased composition (polar residues). A disordered region spans residues 1043–1064 (ATSESISFNQTKEKSNSTLGRL). 2 coiled-coil regions span residues 1174–1202 (VTLK…MKEA) and 1417–1447 (KKRE…EKIV). The span at 1458 to 1471 (QTSQLTKNSFNPSR) shows a compositional bias: polar residues. Residues 1458–1479 (QTSQLTKNSFNPSRQKTDKNLE) form a disordered region. Residues 2086–2106 (VWFPSGSLSQQVLPVHYIYVF) traverse the membrane as a helical segment. The tract at residues 2200–2222 (KQEKRILKSKQRRKITDSKQSTE) is disordered.

This sequence belongs to the ycf78 family.

The protein localises to the plastid. It is found in the chloroplast membrane. This is an uncharacterized protein from Tetradesmus obliquus (Green alga).